We begin with the raw amino-acid sequence, 118 residues long: Mitochondrial protein YPR099C (118 aa).

The protein resides in the mitochondrion. Essential for the functional mitochondria and respiratory growth. The sequence is that of Mitochondrial protein YPR099C from Saccharomyces cerevisiae (strain ATCC 204508 / S288c) (Baker's yeast).